Consider the following 296-residue polypeptide: Aspartate and glycine-rich protein (296 aa).

Gly residues predominate over residues 1–77 (GDGENGNGNG…GNGNGNGNGN (77 aa)). Disordered regions lie at residues 1–219 (GDGE…DNGG) and 233–296 (RARA…YTSY). Composition is skewed to acidic residues over residues 80–96 (FDDD…DDWN) and 103–194 (NGDD…DDRW). A compositionally biased stretch (gly residues) spans 198-210 (NGNGNGNGNGNGN). Positions 233–243 (RARAAASAAGR) are enriched in low complexity. A compositionally biased stretch (gly residues) spans 244–259 (SRGGSGGSGGSGGSGG). Low complexity predominate over residues 270-281 (RAFASARASSGN).

In terms of tissue distribution, component of the acid-soluble and acid-insoluble organic matrix of calcified shell layers (at protein level).

Its subcellular location is the secreted. This is Aspartate and glycine-rich protein from Haliotis asinina (Donkey's ear abalone).